A 283-amino-acid polypeptide reads, in one-letter code: CDP-abequose synthase (283 aa).

NAD(+) contacts are provided by residues 7–13 (GGSGYIG), 48–49 (EF), Tyr129, and Lys133. Catalysis depends on Tyr129, which acts as the Proton acceptor.

The protein belongs to the NAD(P)-dependent epimerase/dehydratase family.

It carries out the reaction CDP-alpha-D-abequose + NADP(+) = CDP-4-dehydro-3,6-dideoxy-alpha-D-glucose + NADPH + H(+). Its pathway is bacterial outer membrane biogenesis; LPS O-antigen biosynthesis. The CDP-abequose synthase is involved in lipopolysaccharides (LPS) synthesis containing abequose which are important antigens of the cell surface responsible for the serological O specificity. Derivatives of the 3,6-dideoxyhexose group have a particular highly immunogenic character. The chain is CDP-abequose synthase (rfbJ) from Yersinia pseudotuberculosis.